Consider the following 328-residue polypeptide: Bidirectional sugar transporter SWEET16 (328 aa).

At 1–5 (MADPS) the chain is on the extracellular side. A helical transmembrane segment spans residues 6 to 26 (FFVGIVGNVISILVFASPIAT). Residues 6–92 (FFVGIVGNVI…TLYLAYAPRE (87 aa)) form the MtN3/slv 1 domain. Residues 27–38 (FRRIVRSKSTEE) are Cytoplasmic-facing. A helical membrane pass occupies residues 39–56 (FRWLPYVTTLLSTSLWTF). Residues 57 to 63 (YGLHKPG) lie on the Extracellular side of the membrane. A helical membrane pass occupies residues 64–84 (GLLIVTVNGSGAALEAIYVTL). Over 85-99 (YLAYAPRETKAKMVK) the chain is Cytoplasmic. The helical transmembrane segment at 100–120 (VVLAVNVGALAAVVAVALVAL) threads the bilayer. At 121–125 (HGGVR) the chain is on the extracellular side. The helical transmembrane segment at 126 to 146 (LFVVGVLCAALTIGMYAAPMA) threads the bilayer. A MtN3/slv 2 domain is found at 127–213 (FVVGVLCAAL…LYMAYRRTKK (87 aa)). The Cytoplasmic segment spans residues 147–161 (AMRTVVKTRSVEYMP). The chain crosses the membrane as a helical span at residues 162 to 182 (FSLSFFLFLNGGVWSVYSLLV). Topologically, residues 183–185 (KDY) are extracellular. The chain crosses the membrane as a helical span at residues 186–206 (FIGIPNAIGFALGTAQLALYM). The Cytoplasmic segment spans residues 207 to 328 (AYRRTKKPAG…ATTAGPGDRH (122 aa)). A compositionally biased stretch (basic residues) spans 288-299 (HQHHGGHHHHHR). The interval 288 to 328 (HQHHGGHHHHHRFDTVPDDDDEAVAAGGTTPATTAGPGDRH) is disordered. Over residues 312–328 (AAGGTTPATTAGPGDRH) the composition is skewed to low complexity.

The protein belongs to the SWEET sugar transporter family. Forms homooligomers and/or heterooligomers.

The protein localises to the cell membrane. Its function is as follows. Mediates both low-affinity uptake and efflux of sugar across the plasma membrane. This chain is Bidirectional sugar transporter SWEET16 (SWEET16), found in Oryza sativa subsp. japonica (Rice).